Consider the following 348-residue polypeptide: Phenylalanine--tRNA ligase alpha subunit (348 aa).

Position 259 (Glu-259) interacts with Mg(2+).

It belongs to the class-II aminoacyl-tRNA synthetase family. Phe-tRNA synthetase alpha subunit type 1 subfamily. Tetramer of two alpha and two beta subunits. Mg(2+) serves as cofactor.

It is found in the cytoplasm. The enzyme catalyses tRNA(Phe) + L-phenylalanine + ATP = L-phenylalanyl-tRNA(Phe) + AMP + diphosphate + H(+). The sequence is that of Phenylalanine--tRNA ligase alpha subunit from Levilactobacillus brevis (strain ATCC 367 / BCRC 12310 / CIP 105137 / JCM 1170 / LMG 11437 / NCIMB 947 / NCTC 947) (Lactobacillus brevis).